We begin with the raw amino-acid sequence, 122 residues long: Small ribosomal subunit protein uS12 (122 aa).

Aspartate 89 carries the 3-methylthioaspartic acid modification.

This sequence belongs to the universal ribosomal protein uS12 family. In terms of assembly, part of the 30S ribosomal subunit. Contacts proteins S8 and S17. May interact with IF1 in the 30S initiation complex.

Functionally, with S4 and S5 plays an important role in translational accuracy. Its function is as follows. Interacts with and stabilizes bases of the 16S rRNA that are involved in tRNA selection in the A site and with the mRNA backbone. Located at the interface of the 30S and 50S subunits, it traverses the body of the 30S subunit contacting proteins on the other side and probably holding the rRNA structure together. The combined cluster of proteins S8, S12 and S17 appears to hold together the shoulder and platform of the 30S subunit. This is Small ribosomal subunit protein uS12 from Corynebacterium glutamicum (strain R).